A 523-amino-acid chain; its full sequence is Light-independent protochlorophyllide reductase subunit B (523 aa).

Residue aspartate 36 participates in [4Fe-4S] cluster binding. The Proton donor role is filled by aspartate 290. A substrate-binding site is contributed by 425 to 426 (GL).

It belongs to the ChlB/BchB/BchZ family. As to quaternary structure, protochlorophyllide reductase is composed of three subunits; ChlL, ChlN and ChlB. Forms a heterotetramer of two ChlB and two ChlN subunits. It depends on [4Fe-4S] cluster as a cofactor.

The enzyme catalyses chlorophyllide a + oxidized 2[4Fe-4S]-[ferredoxin] + 2 ADP + 2 phosphate = protochlorophyllide a + reduced 2[4Fe-4S]-[ferredoxin] + 2 ATP + 2 H2O. It functions in the pathway porphyrin-containing compound metabolism; chlorophyll biosynthesis (light-independent). Functionally, component of the dark-operative protochlorophyllide reductase (DPOR) that uses Mg-ATP and reduced ferredoxin to reduce ring D of protochlorophyllide (Pchlide) to form chlorophyllide a (Chlide). This reaction is light-independent. The NB-protein (ChlN-ChlB) is the catalytic component of the complex. This is Light-independent protochlorophyllide reductase subunit B from Prochlorococcus marinus (strain MIT 9301).